We begin with the raw amino-acid sequence, 199 residues long: FMN-dependent NADH:quinone oxidoreductase 4 (199 aa).

FMN is bound by residues Ser10, 95–98, and 139–142; these read MYNL and SRGG.

The protein belongs to the azoreductase type 1 family. Homodimer. FMN is required as a cofactor.

The enzyme catalyses 2 a quinone + NADH + H(+) = 2 a 1,4-benzosemiquinone + NAD(+). The catalysed reaction is N,N-dimethyl-1,4-phenylenediamine + anthranilate + 2 NAD(+) = 2-(4-dimethylaminophenyl)diazenylbenzoate + 2 NADH + 2 H(+). In terms of biological role, quinone reductase that provides resistance to thiol-specific stress caused by electrophilic quinones. Its function is as follows. Also exhibits azoreductase activity. Catalyzes the reductive cleavage of the azo bond in aromatic azo compounds to the corresponding amines. In Burkholderia lata (strain ATCC 17760 / DSM 23089 / LMG 22485 / NCIMB 9086 / R18194 / 383), this protein is FMN-dependent NADH:quinone oxidoreductase 4.